We begin with the raw amino-acid sequence, 263 residues long: 4-hydroxy-2-oxo-heptane-1,7-dioate aldolase (263 aa).

His45 serves as the catalytic Proton acceptor. A substrate-binding site is contributed by Gln147. Position 149 (Glu149) interacts with a divalent metal cation. The substrate site is built by Ala174 and Asp175. An a divalent metal cation-binding site is contributed by Asp175.

The protein belongs to the HpcH/HpaI aldolase family. In terms of assembly, homohexamer; trimer of dimers. A divalent metal cation serves as cofactor.

It catalyses the reaction 4-hydroxy-2-oxoheptanedioate = succinate semialdehyde + pyruvate. The protein operates within aromatic compound metabolism; 4-hydroxyphenylacetate degradation; pyruvate and succinate semialdehyde from 4-hydroxyphenylacetate: step 7/7. Its function is as follows. Catalyzes the reversible retro-aldol cleavage of 4-hydroxy-2-ketoheptane-1,7-dioate (HKHD) to pyruvate and succinic semialdehyde. This is 4-hydroxy-2-oxo-heptane-1,7-dioate aldolase from Salmonella enteritidis PT4 (strain P125109).